Consider the following 333-residue polypeptide: NADH-quinone oxidoreductase subunit H (333 aa).

A run of 8 helical transmembrane segments spans residues 15-35 (IALF…FVTY), 88-108 (YVLA…VLPF), 117-137 (IGVG…GVVA), 165-185 (LVMS…VDIV), 191-211 (VWFI…AVAE), 241-261 (FFML…TILF), 274-294 (IPGA…LIWF), and 313-333 (VLLP…AWFF).

Belongs to the complex I subunit 1 family. As to quaternary structure, NDH-1 is composed of 14 different subunits. Subunits NuoA, H, J, K, L, M, N constitute the membrane sector of the complex.

The protein localises to the cell membrane. It carries out the reaction a quinone + NADH + 5 H(+)(in) = a quinol + NAD(+) + 4 H(+)(out). Functionally, NDH-1 shuttles electrons from NADH, via FMN and iron-sulfur (Fe-S) centers, to quinones in the respiratory chain. The immediate electron acceptor for the enzyme in this species is believed to be ubiquinone. Couples the redox reaction to proton translocation (for every two electrons transferred, four hydrogen ions are translocated across the cytoplasmic membrane), and thus conserves the redox energy in a proton gradient. This subunit may bind ubiquinone. The sequence is that of NADH-quinone oxidoreductase subunit H from Geobacillus kaustophilus (strain HTA426).